The primary structure comprises 72 residues: Translation initiation factor IF-1 (72 aa).

One can recognise an S1-like domain in the interval 1–72; the sequence is MAKEEVLEFP…TKGRITYRLK (72 aa).

This sequence belongs to the IF-1 family. In terms of assembly, component of the 30S ribosomal translation pre-initiation complex which assembles on the 30S ribosome in the order IF-2 and IF-3, IF-1 and N-formylmethionyl-tRNA(fMet); mRNA recruitment can occur at any time during PIC assembly.

Its subcellular location is the cytoplasm. In terms of biological role, one of the essential components for the initiation of protein synthesis. Stabilizes the binding of IF-2 and IF-3 on the 30S subunit to which N-formylmethionyl-tRNA(fMet) subsequently binds. Helps modulate mRNA selection, yielding the 30S pre-initiation complex (PIC). Upon addition of the 50S ribosomal subunit IF-1, IF-2 and IF-3 are released leaving the mature 70S translation initiation complex. The protein is Translation initiation factor IF-1 of Brucella suis biovar 1 (strain 1330).